Reading from the N-terminus, the 102-residue chain is uncharacterized protein (102 aa).

The next 2 helical transmembrane spans lie at 33 to 55 (VLEL…LVVL) and 57 to 79 (VVGV…VVVA).

It is found in the membrane. This is an uncharacterized protein from Saccharomyces cerevisiae (strain ATCC 204508 / S288c) (Baker's yeast).